A 206-amino-acid chain; its full sequence is FMN-dependent NADH:quinone oxidoreductase (206 aa).

Residues 15 to 17 (SVS), 94 to 97 (MYNF), and 138 to 141 (TRGG) each bind FMN.

Belongs to the azoreductase type 1 family. Homodimer. Requires FMN as cofactor.

The enzyme catalyses 2 a quinone + NADH + H(+) = 2 a 1,4-benzosemiquinone + NAD(+). It catalyses the reaction N,N-dimethyl-1,4-phenylenediamine + anthranilate + 2 NAD(+) = 2-(4-dimethylaminophenyl)diazenylbenzoate + 2 NADH + 2 H(+). In terms of biological role, quinone reductase that provides resistance to thiol-specific stress caused by electrophilic quinones. Also exhibits azoreductase activity. Catalyzes the reductive cleavage of the azo bond in aromatic azo compounds to the corresponding amines. In Sinorhizobium fredii (strain NBRC 101917 / NGR234), this protein is FMN-dependent NADH:quinone oxidoreductase.